A 690-amino-acid polypeptide reads, in one-letter code: MLRGQEERKYSIRKYSIGVVSVLAATMFVVSSHEAQASEKTPTNAAVQKETLNQPGEQGNAITSHQMQSGKQLDDMHKENGKSGTVTEGKDTLQLSKYQSTQNSKTIRTQNDNQVKQDSERQGSKQSHQNNATNNTERQNDQVQNTHHAERNGSQSTTSQSNDVDKSQPSIPAQKVLPNHDKAAPTSTTPPSNDKTAPKSTKAQDATTDKHPNQQDTHQPAHQIIDAKQDDTVRQSEQKPQVGDLSKHIDGQNSPEKPTDKNTDNKQLIKDALQAPKTRSTTNAAADAKKVRPLKANQVQPLNKYPVVFVHGFLGLVGDNAPALYPNYWGGNKFKVIEELRKQGYNVHQASVSAFGSNYDRAVELYYYIKGGRVDYGAAHAAKYGHERYGKTYKGIMPNWEPGKKVHLVGHSMGGQTIRLMEEFLRNGNKEEIAYHKAHGGEISPLFTGGHNNMVASITTLATPHNGSQAADKFGNTEAVRKIMFALNRFMGNKYSNIDLGLTQWGFKQLPNESYIDYIKRVSKSKIWTSDDNAAYDLTLDGSAKLNNMTSMNPNITYTTYTGVSSHTGPLGYENPDLGTFFLMDTTSRIIGHDAREEWRKNDGVVPVISSLHPSNQPFVNVTNDEPATRRGIWQVKPIIQGWDHVDFIGVDFLDFKRKGAELANFYTGIINDLLRVEATESKGTQLKAS.

The first 37 residues, 1–37 (MLRGQEERKYSIRKYSIGVVSVLAATMFVVSSHEAQA), serve as a signal peptide directing secretion. Residues 38–295 (SEKTPTNAAV…ADAKKVRPLK (258 aa)) constitute a propeptide that is removed on maturation. A compositionally biased stretch (polar residues) spans 53–71 (NQPGEQGNAITSHQMQSGK). The segment at 53-266 (NQPGEQGNAI…KPTDKNTDNK (214 aa)) is disordered. Residues 72–81 (QLDDMHKENG) are compositionally biased toward basic and acidic residues. Composition is skewed to polar residues over residues 93-114 (LQLS…NDNQ), 124-171 (SKQS…QPSI), and 185-206 (PTST…AQDA). Composition is skewed to basic and acidic residues over residues 225 to 237 (IDAK…RQSE) and 257 to 266 (KPTDKNTDNK). Ser-412 functions as the Nucleophile in the catalytic mechanism. Ca(2+) is bound at residue Gly-579. Asp-603 serves as the catalytic Charge relay system. Asp-644 contributes to the Ca(2+) binding site. The Charge relay system role is filled by His-645. Ca(2+)-binding residues include Asp-647, Asp-652, and Asp-655.

This sequence belongs to the AB hydrolase superfamily. Lipase family.

It localises to the secreted. The catalysed reaction is a triacylglycerol + H2O = a diacylglycerol + a fatty acid + H(+). The protein is Lipase 2 (lip2) of Staphylococcus aureus (strain MSSA476).